The chain runs to 221 residues: GTP cyclohydrolase-2 (221 aa).

Residue 63 to 67 coordinates GTP; sequence RLHSE. The Zn(2+) site is built by C68, C79, and C81. GTP contacts are provided by residues Q84, 107–109, and T129; that span reads EGR. D141 serves as the catalytic Proton acceptor. The active-site Nucleophile is R143. Residues S164 and K169 each coordinate GTP.

Belongs to the GTP cyclohydrolase II family. Zn(2+) serves as cofactor.

The catalysed reaction is GTP + 4 H2O = 2,5-diamino-6-hydroxy-4-(5-phosphoribosylamino)-pyrimidine + formate + 2 phosphate + 3 H(+). Its pathway is cofactor biosynthesis; riboflavin biosynthesis; 5-amino-6-(D-ribitylamino)uracil from GTP: step 1/4. Functionally, catalyzes the conversion of GTP to 2,5-diamino-6-ribosylamino-4(3H)-pyrimidinone 5'-phosphate (DARP), formate and pyrophosphate. This Streptomyces coelicolor (strain ATCC BAA-471 / A3(2) / M145) protein is GTP cyclohydrolase-2.